A 343-amino-acid chain; its full sequence is Dihydroorotase (343 aa).

Residues histidine 13 and histidine 15 each contribute to the Zn(2+) site. Substrate-binding positions include 15–17 (HLR) and asparagine 41. Residues lysine 99, histidine 136, and histidine 174 each coordinate Zn(2+). Lysine 99 is modified (N6-carboxylysine). Histidine 136 contacts substrate. Residue leucine 219 participates in substrate binding. Aspartate 247 serves as a coordination point for Zn(2+). Aspartate 247 is a catalytic residue. Positions 251 and 263 each coordinate substrate.

The protein belongs to the metallo-dependent hydrolases superfamily. DHOase family. Class II DHOase subfamily. In terms of assembly, homodimer. It depends on Zn(2+) as a cofactor.

The catalysed reaction is (S)-dihydroorotate + H2O = N-carbamoyl-L-aspartate + H(+). Its pathway is pyrimidine metabolism; UMP biosynthesis via de novo pathway; (S)-dihydroorotate from bicarbonate: step 3/3. In terms of biological role, catalyzes the reversible cyclization of carbamoyl aspartate to dihydroorotate. The chain is Dihydroorotase from Shewanella baltica (strain OS155 / ATCC BAA-1091).